Consider the following 558-residue polypeptide: T-complex protein 1 subunit eta (558 aa).

The disordered stretch occupies residues 524-558 (VRNPKSEQPKAPPGGLRRGGPQGMAGLAKNARLGK).

Belongs to the TCP-1 chaperonin family. In terms of assembly, heterooligomeric complex of about 850 to 900 kDa that forms two stacked rings, 12 to 16 nm in diameter.

The protein localises to the cytoplasm. In terms of biological role, molecular chaperone; assists the folding of proteins upon ATP hydrolysis. Known to play a role, in vitro, in the folding of actin and tubulin. This Tetrahymena pyriformis protein is T-complex protein 1 subunit eta.